We begin with the raw amino-acid sequence, 94 residues long: MTINYQFGDVDAHGAMIRAQAASLEAEHQAIVRDVLAAGDFWGGAGSVACQEFITQLGRNFQVIYEQANAHGQKVQAAGNNMAQTDSAVGSSWA.

The protein belongs to the WXG100 family. ESAT-6 subfamily.

It is found in the secreted. This is ESAT-6-like protein EsxN from Mycobacterium bovis (strain ATCC BAA-935 / AF2122/97).